A 462-amino-acid chain; its full sequence is Cysteine desulfurase, mitochondrial (462 aa).

Residues 132–133, Asn-212, Gln-240, and 260–262 contribute to the pyridoxal 5'-phosphate site; these read AT and SGH. N6-(pyridoxal phosphate)lysine is present on Lys-263. Thr-300 contacts pyridoxal 5'-phosphate. Cys-386 acts as the Cysteine persulfide intermediate in catalysis. Cys-386 is a binding site for [2Fe-2S] cluster.

The protein belongs to the class-V pyridoxal-phosphate-dependent aminotransferase family. NifS/IscS subfamily. Component of the mitochondrial core iron-sulfur cluster (ISC) assembly complex at least composed of the cystein desulfurase Nfs1, the scaffold protein IscU, the accessory protein bcn92/Isd11/Lyrm4, and probably fh/frataxin. Interacts with bcn92/Isd11/Lyrm4 and IscU. It depends on pyridoxal 5'-phosphate as a cofactor. Ubiquitous expression at high levels in any life stage.

It is found in the mitochondrion. The protein localises to the nucleus. It carries out the reaction (sulfur carrier)-H + L-cysteine = (sulfur carrier)-SH + L-alanine. Active when in complex with bcn92/Isd11/Lyrm4. L-cysteine binding kinetics are reduced in the presence of bcn92/Isd11/Lyrm4 and IscU. Activity is regulated by other components of the mitochondrial core iron-sulfur cluster (ISC) complex; Activity is reduced in the presence of IscU but enhanced when both IscU and fh/frataxin are present. Catalyzes the removal of elemental sulfur from cysteine to produce alanine. It supplies the inorganic sulfur for iron-sulfur (Fe-S) clusters. The protein is Cysteine desulfurase, mitochondrial of Drosophila melanogaster (Fruit fly).